Here is a 56-residue protein sequence, read N- to C-terminus: Large ribosomal subunit protein bL33 (56 aa).

The segment covering 1–12 (MASKGGREKIKL) has biased composition (basic and acidic residues). The tract at residues 1–27 (MASKGGREKIKLESTAGTGHFYTTNKN) is disordered.

It belongs to the bacterial ribosomal protein bL33 family.

This is Large ribosomal subunit protein bL33 from Leptothrix cholodnii (strain ATCC 51168 / LMG 8142 / SP-6) (Leptothrix discophora (strain SP-6)).